Here is a 350-residue protein sequence, read N- to C-terminus: Ferredoxin--NADP reductase (350 aa).

Residues threonine 22, glutamate 41, glutamine 49, tyrosine 54, valine 94, phenylalanine 129, aspartate 295, and serine 336 each contribute to the FAD site.

Belongs to the ferredoxin--NADP reductase type 2 family. In terms of assembly, homodimer. The cofactor is FAD.

The enzyme catalyses 2 reduced [2Fe-2S]-[ferredoxin] + NADP(+) + H(+) = 2 oxidized [2Fe-2S]-[ferredoxin] + NADPH. This chain is Ferredoxin--NADP reductase, found in Chlorobium luteolum (strain DSM 273 / BCRC 81028 / 2530) (Pelodictyon luteolum).